We begin with the raw amino-acid sequence, 96 residues long: Large ribosomal subunit protein bL27 (96 aa).

A propeptide spanning residues Met-1–Phe-9 is cleaved from the precursor. The segment at Met-1–Gly-36 is disordered. Residues Phe-8–Lys-19 are compositionally biased toward polar residues. Over residues Asn-20 to Asp-35 the composition is skewed to basic and acidic residues.

It belongs to the bacterial ribosomal protein bL27 family. The N-terminus is cleaved by ribosomal processing cysteine protease Prp.

This is Large ribosomal subunit protein bL27 from Oceanobacillus iheyensis (strain DSM 14371 / CIP 107618 / JCM 11309 / KCTC 3954 / HTE831).